The following is a 531-amino-acid chain: MEGESYNESTVNGTPVNHQALERHGLWEVITIAVVTAVVSLMTIVGNVLVMISFKVNSQLKTVNNYYLLSLACADLIIGIFSMNLYTTYILMGRWVLGSLACDLWLALDYVASNASVMNLLVISFDRYFSITRPLTYRAKRTPKRAGIMIGLAWLVSFILWAPAILCWQYLVGKRTVPPDECQIQFLSEPTITFGTAIAAFYIPVSVMTILYCRIYRETEKRTKDLADLQGSDSVAEAKKREPAQRTLLRSFFSCPRPSLAQRERNQASWSSSRRSTSTTGKTTQATDLSADWEKAEQVTTCSSYPSSEDEAKPTTDPVFQMVYKSEAKESPGKESNTQETKETVVNTRTENSDYDTPKYFLSPAAAHRLKSQKCVAYKFRLVVKADGTQETNNGCRKVKIMPCSFPVSKDPSTKGPDPNLSHQMTKRKRMVLVKERKAAQTLSAILLAFIITWTPYNIMVLVSTFCDKCVPVTLWHLGYWLCYVNSTINPICYALCNRTFRKTFKLLLLCRWKKKKVEEKLYWQGNSKLP.

Residues 1–28 (MEGESYNESTVNGTPVNHQALERHGLWE) are Extracellular-facing. Residue Asn7 is glycosylated (N-linked (GlcNAc...) asparagine). Residues 29-52 (VITIAVVTAVVSLMTIVGNVLVMI) traverse the membrane as a helical segment. Residues 53 to 65 (SFKVNSQLKTVNN) are Cytoplasmic-facing. Residues 66 to 86 (YYLLSLACADLIIGIFSMNLY) traverse the membrane as a helical segment. At 87–103 (TTYILMGRWVLGSLACD) the chain is on the extracellular side. Cys102 and Cys182 form a disulfide bridge. A helical membrane pass occupies residues 104–125 (LWLALDYVASNASVMNLLVISF). The Cytoplasmic portion of the chain corresponds to 126 to 145 (DRYFSITRPLTYRAKRTPKR). A helical membrane pass occupies residues 146 to 168 (AGIMIGLAWLVSFILWAPAILCW). Over 169-190 (QYLVGKRTVPPDECQIQFLSEP) the chain is Extracellular. A helical membrane pass occupies residues 191–213 (TITFGTAIAAFYIPVSVMTILYC). Topologically, residues 214 to 442 (RIYRETEKRT…LVKERKAAQT (229 aa)) are cytoplasmic. Disordered stretches follow at residues 259 to 295 (SLAQ…DWEK) and 327 to 346 (EAKE…ETVV). Residues 267–287 (QASWSSSRRSTSTTGKTTQAT) show a composition bias toward low complexity. The segment covering 334-346 (KESNTQETKETVV) has biased composition (polar residues). The chain crosses the membrane as a helical span at residues 443-463 (LSAILLAFIITWTPYNIMVLV). At 464-477 (STFCDKCVPVTLWH) the chain is on the extracellular side. Residues 478-497 (LGYWLCYVNSTINPICYALC) form a helical membrane-spanning segment. At 498–531 (NRTFRKTFKLLLLCRWKKKKVEEKLYWQGNSKLP) the chain is on the cytoplasmic side. Phosphothreonine is present on residues Thr500 and Thr504.

It belongs to the G-protein coupled receptor 1 family. Muscarinic acetylcholine receptor subfamily. CHRM5 sub-subfamily.

It is found in the cell membrane. Its subcellular location is the postsynaptic cell membrane. Its function is as follows. The muscarinic acetylcholine receptor mediates various cellular responses, including inhibition of adenylate cyclase, breakdown of phosphoinositides and modulation of potassium channels through the action of G proteins. Primary transducing effect is Pi turnover. This is Muscarinic acetylcholine receptor M5 (Chrm5) from Rattus norvegicus (Rat).